We begin with the raw amino-acid sequence, 517 residues long: DNA-(apurinic or apyrimidinic site) endonuclease 2 (517 aa).

Residues N9 and E34 each contribute to the Mg(2+) site. Residues 82–90 carry the Claspin-like CKB motif motif; it reads EEGLSGVFC. The active site involves Y142. D183, N185, D299, and H300 together coordinate Mg(2+). D183 functions as the Proton donor/acceptor in the catalytic mechanism. H300 serves as the catalytic Proton acceptor. A compositionally biased stretch (polar residues) spans 347–362; sequence GNTTEESSELTGTPSF. The tract at residues 347–366 is disordered; it reads GNTTEESSELTGTPSFTEGA. Positions 395–402 match the PCNA interacting protein (PIP) box motif; the sequence is QGNLLSFF. The Zn(2+) site is built by C463, H466, C489, and C503. The GRF-type zinc-finger motif lies at 463–512; the sequence is CKGHSEPCVLRTVKKAGPNCGRQFYVCARPEGHSSNPQARCNFFLWLTKK.

This sequence belongs to the DNA repair enzymes AP/ExoA family. Interacts (via PIP box and GRF-type Zinc finger domain) with pcna; the interaction is required for 3 -5 SSB end resection, assembly of a checkpoint protein complex to SSB sites, and SSB signaling. Interacts with chek1. Requires Mg(2+) as cofactor. It depends on Mn(2+) as a cofactor. Expressed in eggs (at protein level).

Its subcellular location is the nucleus. It localises to the chromosome. It is found in the cytoplasm. The protein localises to the mitochondrion. It catalyses the reaction Exonucleolytic cleavage in the 3'- to 5'-direction to yield nucleoside 5'-phosphates.. 3'-5' nuclease activity is stimulated in presence of pcna. In terms of biological role, functions as a weak apurinic/apyrimidinic (AP) endodeoxyribonuclease in the DNA base excision repair (BER) pathway of DNA lesions induced by oxidative and alkylating agents. Initiates repair of AP sites in DNA by catalyzing hydrolytic incision of the phosphodiester backbone immediately adjacent to the damage, generating a single-strand break with 5'-deoxyribose phosphate and 3'-hydroxyl ends. Exhibits 3'-5' exonuclease activity on a 3' DNA substrate; nuclease activity is stimulated by interaction with pcna. Has a preference for the 3' recessed ends over blunt-ended substrates, in both the presence and the absence of pcna. Generates single-stranded DNA (ssDNA) via 3'-5' single-strand break (SSB) end resection, thereby promoting a DNA damage response via replication protein A (rpa2)-binding to ssDNA and the recruitment of a checkpoint protein complex, including atr, atr-interacting protein atrip, and rad9, to damage sites following oxidative stress. Plays a role in reversing blocked 3' DNA ends, problematic lesions that preclude DNA synthesis. Required for chek1 phosphorylation induced by hydrogen peroxide but not by stalled replication forks. This is DNA-(apurinic or apyrimidinic site) endonuclease 2 from Xenopus laevis (African clawed frog).